The following is a 224-amino-acid chain: UPF0758 protein PFL_6051 (224 aa).

The 123-residue stretch at 102–224 (ALENPLVVRD…PLSMAEYGWI (123 aa)) folds into the MPN domain. The Zn(2+) site is built by H173, H175, and D186. The JAMM motif signature appears at 173 to 186 (HNHPSGICEPSPAD).

Belongs to the UPF0758 family.

The protein is UPF0758 protein PFL_6051 of Pseudomonas fluorescens (strain ATCC BAA-477 / NRRL B-23932 / Pf-5).